Here is a 280-residue protein sequence, read N- to C-terminus: Golgi phosphoprotein 3-like A (280 aa).

A disordered region spans residues 1 to 32; it reads MTTLIRRGRRAEEGQERRADSEDSIKDKDEEE. Over residues 10–32 the composition is skewed to basic and acidic residues; sequence RAEEGQERRADSEDSIKDKDEEE. Residues Trp-62, Arg-71, Arg-152, and Arg-155 each contribute to the a 1,2-diacyl-sn-glycero-3-phospho-(1D-myo-inositol 4-phosphate) site. Residues 171 to 182 are beta-hairpin required for oligomerization; sequence EKQNFLLFDMTT.

This sequence belongs to the GOLPH3/VPS74 family. In terms of assembly, homooligomer.

It localises to the golgi apparatus. It is found in the golgi stack membrane. The protein resides in the trans-Golgi network membrane. Phosphatidylinositol-4-phosphate-binding protein that may play a role in the process of vesicle budding at the Golgi and anterograde transport to the plasma membrane. The protein is Golgi phosphoprotein 3-like A (golph3l-a) of Xenopus laevis (African clawed frog).